The following is a 557-amino-acid chain: 2-succinyl-5-enolpyruvyl-6-hydroxy-3-cyclohexene-1-carboxylate synthase (557 aa).

It belongs to the TPP enzyme family. MenD subfamily. In terms of assembly, homodimer. It depends on Mg(2+) as a cofactor. Mn(2+) serves as cofactor. Thiamine diphosphate is required as a cofactor.

It catalyses the reaction isochorismate + 2-oxoglutarate + H(+) = 5-enolpyruvoyl-6-hydroxy-2-succinyl-cyclohex-3-ene-1-carboxylate + CO2. It participates in quinol/quinone metabolism; 1,4-dihydroxy-2-naphthoate biosynthesis; 1,4-dihydroxy-2-naphthoate from chorismate: step 2/7. The protein operates within quinol/quinone metabolism; menaquinone biosynthesis. In terms of biological role, catalyzes the thiamine diphosphate-dependent decarboxylation of 2-oxoglutarate and the subsequent addition of the resulting succinic semialdehyde-thiamine pyrophosphate anion to isochorismate to yield 2-succinyl-5-enolpyruvyl-6-hydroxy-3-cyclohexene-1-carboxylate (SEPHCHC). The polypeptide is 2-succinyl-5-enolpyruvyl-6-hydroxy-3-cyclohexene-1-carboxylate synthase (Yersinia enterocolitica serotype O:8 / biotype 1B (strain NCTC 13174 / 8081)).